A 148-amino-acid chain; its full sequence is Protein RESISTANCE TO POWDERY MILDEW 8.1 (148 aa).

The region spanning 1 to 148 (MPIGELAIGA…VISACSKIRA (148 aa)) is the RPW8 domain. A helical transmembrane segment spans residues 7 to 23 (AIGAVLGVGAQAIYDRF). Residues 120 to 140 (DDIKEIKAKISEMDTKLAEVI) adopt a coiled-coil conformation.

Belongs to the plant RPW8 protein family.

It localises to the membrane. Functionally, disease resistance (R) protein that induces localized, salicylic acid-dependent defenses. Confers resistance to powdery mildew (e.g. Erysiphe cichoracearum UCSC1). The chain is Protein RESISTANCE TO POWDERY MILDEW 8.1 from Arabidopsis thaliana (Mouse-ear cress).